Here is a 546-residue protein sequence, read N- to C-terminus: MASPGSTALPHKRQRVRKACVPCRERKRKCNGKSPCEMCVAYGYVCHYIDGRVPSASPQVQQVGETSPDTESRPFVLPGIHRNEQPQPINTQNVTSQNIVDPTKSRYTIQHSAVAFPRCLGLELRSTNPPRLHSFAWHCGIRPEENPNSHVLLSDLVTKEEYYRISKVYFSVVHPIFDVVNPEQLAKNVEKYWDGDVKTLEYGAVIAGVIALGSFFMGSLGHPREMDIVQYAKGILDDPTFSRIPTVEQVSAWVLRTIYLRATSRPHVAWLASCVTIHLSEAIGLHHEIDREDIAISNNVPPKRTTVVSEHTRRLFWCAWSINTILSYDYGRSSVTLNRITCKPVKETDGNFTAHLVALAHLIPQDSVNANAAQLLQALAAVHESPNAHPFLSLTKGDICLSLYRRLRLLNHILDKNVVLQIIDIGNTALSAAYALVKLDQAWWNVLSTSFQYVCVLLAIDTPESLSHVATAMKTLDNITQILGTRIAFEAQKTAKLLLEDSMKKKRQEIQQLEQATHQRSNLETTHLLDIDWDALLDPSDTLNFM.

The zn(2)-C6 fungal-type DNA-binding region spans 20–46; sequence CVPCRERKRKCNGKSPCEMCVAYGYVC.

It localises to the nucleus. Transcriptional repressor of multidrug resistance genes, such as PDR5. Required for growth on non-fermentable carbon sources like lactate or glycerol. The sequence is that of Protein RDR1 (RDR1) from Saccharomyces cerevisiae (strain ATCC 204508 / S288c) (Baker's yeast).